Reading from the N-terminus, the 110-residue chain is UPF0060 membrane protein Bcep18194_A4425 (110 aa).

4 consecutive transmembrane segments (helical) span residues 9 to 29 (ALFA…WLVL), 34 to 54 (PVWL…LLTL), 66 to 86 (YGGV…GVAL), and 88 to 108 (RWDV…ALQP).

Belongs to the UPF0060 family.

It is found in the cell inner membrane. The protein is UPF0060 membrane protein Bcep18194_A4425 of Burkholderia lata (strain ATCC 17760 / DSM 23089 / LMG 22485 / NCIMB 9086 / R18194 / 383).